Consider the following 848-residue polypeptide: Adenylate cyclase (848 aa).

The segment at 1 to 535 is catalytic; sequence MYLYIETLKQ…DVSHHFPLRL (535 aa). A regulatory region spans residues 541–848; that stretch reads KALYSPCEIR…DAPLLQQYFS (308 aa). A Phosphohistidine; by CRR modification is found at H609.

Belongs to the adenylyl cyclase class-1 family.

Its subcellular location is the cytoplasm. It catalyses the reaction ATP = 3',5'-cyclic AMP + diphosphate. In Escherichia coli O6:H1 (strain CFT073 / ATCC 700928 / UPEC), this protein is Adenylate cyclase (cyaA).